A 380-amino-acid chain; its full sequence is MQSTQSTESNLLPLVPAYDSILALAPYQTGKPIEELTREYGVSDVVKLASNENPIGCSPHVTLAITEQIGQLSRYPDGNGYYLKQALADFNDVNVDQITLGNGSDDLLDILARSFVGADDAIVYSQYAFVVYSMLAKMQGAMDVEVPAQRFGHDLKAMSQAIENNSNTKIVFIANPNNPTGTQLEHGELREFVASVPSSVLVVLDEAYIEYSPESNNRALLDEFDNVVIVRTFSKAYGLAGLRVGYALSSAAVADLLNRIRQPFNVSRVALAAAAAALADQDFIEKTRLINDEQMHWLEKQFDALGLGFIKSHANFIMVEIAVEMEDTNAAVIYQALLEQGVIVRQLEVYGLYNWLRISVGVAEDNMRLIDTLRSILTDD.

Position 235 is an N6-(pyridoxal phosphate)lysine (Lys-235).

Belongs to the class-II pyridoxal-phosphate-dependent aminotransferase family. Histidinol-phosphate aminotransferase subfamily. As to quaternary structure, homodimer. The cofactor is pyridoxal 5'-phosphate.

It carries out the reaction L-histidinol phosphate + 2-oxoglutarate = 3-(imidazol-4-yl)-2-oxopropyl phosphate + L-glutamate. Its pathway is amino-acid biosynthesis; L-histidine biosynthesis; L-histidine from 5-phospho-alpha-D-ribose 1-diphosphate: step 7/9. The protein is Histidinol-phosphate aminotransferase 1 of Psychrobacter arcticus (strain DSM 17307 / VKM B-2377 / 273-4).